A 277-amino-acid chain; its full sequence is Pantothenate synthetase (277 aa).

26-33 (MGNLHAGH) is a binding site for ATP. The active-site Proton donor is the His-33. Gln-57 contacts (R)-pantoate. Residue Gln-57 participates in beta-alanine binding. Residue 143–146 (GEKD) participates in ATP binding. Gln-149 lines the (R)-pantoate pocket. Residues Val-172 and 180-183 (LSSR) contribute to the ATP site.

The protein belongs to the pantothenate synthetase family. Homodimer.

The protein localises to the cytoplasm. It catalyses the reaction (R)-pantoate + beta-alanine + ATP = (R)-pantothenate + AMP + diphosphate + H(+). Its pathway is cofactor biosynthesis; (R)-pantothenate biosynthesis; (R)-pantothenate from (R)-pantoate and beta-alanine: step 1/1. Functionally, catalyzes the condensation of pantoate with beta-alanine in an ATP-dependent reaction via a pantoyl-adenylate intermediate. This chain is Pantothenate synthetase, found in Nitrosomonas europaea (strain ATCC 19718 / CIP 103999 / KCTC 2705 / NBRC 14298).